Reading from the N-terminus, the 673-residue chain is Armadillo repeat-containing protein 8 (673 aa).

14 ARM repeats span residues 51–92 (NKQK…SLSM), 95–134 (ENNI…TVFI), 138–176 (TPVQ…HCCK), 178–217 (PEHQ…VLAY), 225–265 (TLVN…YMCR), 269–309 (IRTE…YLME), 313–352 (ELQR…HDLK), 374–413 (DIRK…SLSR), 416–455 (QQLR…NLLL), 458–497 (SPSK…NMAF), 501–540 (QKVK…NLLS), 543–585 (PHID…NIAD), 588–627 (TAKE…NLIW), and 634–673 (QERQ…QYLA).

Identified in the CTLH complex that contains at least MAEA, RMND5A (or alternatively its paralog RMND5B), GID8, WDR26, and RANBP9 and/or RANBP10; ARMC8 has an ancillary role in the complex.

It localises to the nucleus. It is found in the cytoplasm. Its function is as follows. Component of the CTLH E3 ubiquitin-protein ligase complex that mediates ubiquitination and subsequent proteasomal degradation of target proteins. The chain is Armadillo repeat-containing protein 8 (armc8) from Danio rerio (Zebrafish).